The primary structure comprises 730 residues: Diacylglycerol kinase alpha (730 aa).

EF-hand domains lie at 111–146 and 156–191; these read RPEDKLEFTFKLYDMDRNGILDSTEVEKIILQMMRV and ELRPILQEMMREMDQDGSGSVSLDEWVRAGATTVPL. Ca(2+)-binding residues include Asp124, Asp126, Asn128, Glu135, Asp169, Asp171, Ser173, Ser175, and Glu180. 2 Phorbol-ester/DAG-type zinc fingers span residues 206 to 254 and 270 to 320; these read NHIW…AQPC and SHLW…GPEC. Positions 368-501 constitute a DAGKc domain; sequence SNTHPLLVFI…LDRWFLEVIP (134 aa). N6-acetyllysine is present on Lys479.

The protein belongs to the eukaryotic diacylglycerol kinase family. Monomer.

It localises to the cytoplasm. The protein resides in the cytosol. It carries out the reaction a 1,2-diacyl-sn-glycerol + ATP = a 1,2-diacyl-sn-glycero-3-phosphate + ADP + H(+). The enzyme catalyses a 1-O-alkyl-sn-glycerol + ATP = a 1-O-alkyl-sn-glycero-3-phosphate + ADP + H(+). It catalyses the reaction 1-O-alkyl-2-acyl-sn-glycerol + ATP = 1-O-alkyl-2-acyl-sn-glycero-3-phosphate + ADP + H(+). The catalysed reaction is 1,2-dihexadecanoyl-sn-glycerol + ATP = 1,2-dihexadecanoyl-sn-glycero-3-phosphate + ADP + H(+). It carries out the reaction 1-hexadecanoyl-2-(9Z-octadecenoyl)-sn-glycerol + ATP = 1-hexadecanoyl-2-(9Z-octadecenoyl)-sn-glycero-3-phosphate + ADP + H(+). The enzyme catalyses 2-(9Z-octadecenoyl)-glycerol + ATP = 2-(9Z-octadecenoyl)-sn-glycero-3-phosphate + ADP + H(+). It catalyses the reaction 1,2-di-(9Z-octadecenoyl)-sn-glycerol + ATP = 1,2-di-(9Z-octadecenoyl)-sn-glycero-3-phosphate + ADP + H(+). The catalysed reaction is 1-octadecanoyl-2-(5Z,8Z,11Z,14Z-eicosatetraenoyl)-sn-glycerol + ATP = 1-octadecanoyl-2-(5Z,8Z,11Z,14Z-eicosatetraenoyl)-sn-glycero-3-phosphate + ADP + H(+). It carries out the reaction 1,2-didecanoyl-sn-glycerol + ATP = 1,2-didecanoyl-sn-glycero-3-phosphate + ADP + H(+). The enzyme catalyses 1-O-hexadecyl-2-acetyl-sn-glycerol + ATP = 1-O-hexadecyl-2-acetyl-sn-glycero-3-phosphate + ADP + H(+). It catalyses the reaction 1-O-hexadecyl-2-(5Z,8Z,11Z,14Z-eicosatetraenoyl)-sn-glycerol + ATP = 1-O-hexadecyl-2-(5Z,8Z,11Z,14Z-eicosatetraenoyl)-sn-glycero-3-phosphate + ADP + H(+). The catalysed reaction is 1-O-hexadecyl-2-(9Z-octadecenoyl)-sn-glycerol + ATP = 1-O-hexadecyl-2-(9Z-octadecenoyl)-sn-glycero-3-phosphate + ADP + H(+). It carries out the reaction 1-O-hexadecyl-sn-glycerol + ATP = 1-O-hexadecyl-sn-glycero-3-phosphate + ADP + H(+). Its pathway is lipid metabolism; glycerolipid metabolism. Its activity is regulated as follows. Stimulated by calcium and phosphatidylserine. Its function is as follows. Diacylglycerol kinase that converts diacylglycerol/DAG into phosphatidic acid/phosphatidate/PA and regulates the respective levels of these two bioactive lipids. Thereby, acts as a central switch between the signaling pathways activated by these second messengers with different cellular targets and opposite effects in numerous biological processes. Also plays an important role in the biosynthesis of complex lipids. Can also phosphorylate 1-alkyl-2-acylglycerol in vitro as efficiently as diacylglycerol provided it contains an arachidonoyl group. Also involved in the production of alkyl-lysophosphatidic acid, another bioactive lipid, through the phosphorylation of 1-alkyl-2-acetyl glycerol. This chain is Diacylglycerol kinase alpha (Dgka), found in Mus musculus (Mouse).